Here is a 311-residue protein sequence, read N- to C-terminus: tRNA-cytidine(32) 2-sulfurtransferase (311 aa).

Positions 47-52 (SGGKDS) match the PP-loop motif motif. [4Fe-4S] cluster is bound by residues Cys-122, Cys-125, and Cys-213.

It belongs to the TtcA family. In terms of assembly, homodimer. Mg(2+) is required as a cofactor. [4Fe-4S] cluster serves as cofactor.

It localises to the cytoplasm. It carries out the reaction cytidine(32) in tRNA + S-sulfanyl-L-cysteinyl-[cysteine desulfurase] + AH2 + ATP = 2-thiocytidine(32) in tRNA + L-cysteinyl-[cysteine desulfurase] + A + AMP + diphosphate + H(+). The protein operates within tRNA modification. In terms of biological role, catalyzes the ATP-dependent 2-thiolation of cytidine in position 32 of tRNA, to form 2-thiocytidine (s(2)C32). The sulfur atoms are provided by the cysteine/cysteine desulfurase (IscS) system. The polypeptide is tRNA-cytidine(32) 2-sulfurtransferase (Citrobacter koseri (strain ATCC BAA-895 / CDC 4225-83 / SGSC4696)).